The sequence spans 430 residues: Glutamate-1-semialdehyde 2,1-aminomutase (430 aa).

Lys-267 carries the N6-(pyridoxal phosphate)lysine modification.

It belongs to the class-III pyridoxal-phosphate-dependent aminotransferase family. HemL subfamily. In terms of assembly, homodimer. Pyridoxal 5'-phosphate serves as cofactor.

It localises to the cytoplasm. The catalysed reaction is (S)-4-amino-5-oxopentanoate = 5-aminolevulinate. Its pathway is porphyrin-containing compound metabolism; protoporphyrin-IX biosynthesis; 5-aminolevulinate from L-glutamyl-tRNA(Glu): step 2/2. This chain is Glutamate-1-semialdehyde 2,1-aminomutase, found in Natranaerobius thermophilus (strain ATCC BAA-1301 / DSM 18059 / JW/NM-WN-LF).